The chain runs to 538 residues: RNA-binding protein RO60 (538 aa).

The residue at position 1 (methionine 1) is an N-acetylmethionine. Serine 4 and serine 19 each carry phosphoserine. Residues 16 to 369 enclose the TROVE domain; the sequence is IANSQDGYVW…TFKTVEPTGK (354 aa). The tract at residues 120-284 is RNA-binding; sequence RIPTHLFTFI…EMPLTALLRN (165 aa). N6-acetyllysine occurs at positions 224 and 359. A VWFA-like domain region spans residues 361 to 538; the sequence is FKTVEPTGKR…VIRNFTLDMI (178 aa). A divalent metal cation is bound by residues serine 378, serine 380, and threonine 445.

It belongs to the Ro 60 kDa family. As to quaternary structure, identified in a IGF2BP1-dependent mRNP granule complex containing untranslated mRNAs. Found in a complex with PUF60 and Y5 RNA. Interacts with RAB11FIP5.

Its subcellular location is the cytoplasm. In terms of biological role, RNA-binding protein that binds to misfolded non-coding RNAs, pre-5S rRNA, and several small cytoplasmic RNA molecules known as Y RNAs. Binds to endogenous Alu retroelements which are induced by type I interferon and stimulate porinflammatory cytokine secretion. Regulates the expression of Alu retroelements as well as inflammatory genes. May play roles in cilia formation and/or maintenance. The polypeptide is RNA-binding protein RO60 (Homo sapiens (Human)).